The sequence spans 136 residues: MKFEAFKIVPVGYIRKEKNVFIEILPEFREGMEGLREGDWIKLILWFHKSDTPELRRILKVHPHGNPENPLTGVFATRSPFRPNPYTVKVHKIEGNRIYIDWIDAEDGTPVSDIKIFPERYDCPKENYQSTSRLKS.

The region spanning 8 to 126 (IVPVGYIRKE…FPERYDCPKE (119 aa)) is the TsaA-like domain. Residues 48 to 49 (HK), Arg-78, and 106 to 109 (EDGT) each bind S-adenosyl-L-methionine.

The protein belongs to the tRNA methyltransferase O family.

This chain is Probable S-adenosyl-L-methionine-binding protein PH1056, found in Pyrococcus horikoshii (strain ATCC 700860 / DSM 12428 / JCM 9974 / NBRC 100139 / OT-3).